The chain runs to 518 residues: uncharacterized protein (518 aa).

14 consecutive transmembrane segments (helical) span residues 13–33, 49–69, 86–106, 109–129, 141–161, 169–189, 202–222, 231–251, 280–300, 312–332, 341–361, 365–385, 410–430, and 493–513; these read WAIS…GIIS, WGSW…PIVG, CLFG…LFLI, LIQA…ILAT, LLGA…SFLL, WLFL…ACFI, AAGI…MTNL, LGNP…AALI, LIIG…PSYV, GYWM…GGAL, TVIL…LWVT, EFVI…GAPL, IGLT…FDQI, and LYAA…IPAF.

Belongs to the major facilitator superfamily. TCR/Tet family.

The protein localises to the cell membrane. This is an uncharacterized protein from Bacillus subtilis (strain 168).